The sequence spans 310 residues: Small ribosomal subunit biogenesis GTPase RsgA (310 aa).

Residues 77-238 (LSKQSHILAA…IIDTPGIKGF (162 aa)) form the CP-type G domain. Residues 126–129 (NKVD) and 180–188 (GHSGVGKST) contribute to the GTP site. Residues cysteine 262, cysteine 267, histidine 269, and cysteine 275 each coordinate Zn(2+).

The protein belongs to the TRAFAC class YlqF/YawG GTPase family. RsgA subfamily. As to quaternary structure, monomer. Associates with 30S ribosomal subunit, binds 16S rRNA. It depends on Zn(2+) as a cofactor.

It is found in the cytoplasm. Functionally, one of several proteins that assist in the late maturation steps of the functional core of the 30S ribosomal subunit. Helps release RbfA from mature subunits. May play a role in the assembly of ribosomal proteins into the subunit. Circularly permuted GTPase that catalyzes slow GTP hydrolysis, GTPase activity is stimulated by the 30S ribosomal subunit. This chain is Small ribosomal subunit biogenesis GTPase RsgA, found in Bacteroides fragilis (strain YCH46).